Here is a 46-residue protein sequence, read N- to C-terminus: Iota-conotoxin-like R11.7 (46 aa).

Proline 2 and proline 11 each carry 4-hydroxyproline. 4 disulfides stabilise this stretch: cysteine 5-cysteine 19, cysteine 12-cysteine 22, cysteine 18-cysteine 27, and cysteine 21-cysteine 38. A 4-hydroxyproline modification is found at proline 29. Phenylalanine 44 is modified (D-phenylalanine).

The protein belongs to the conotoxin I1 superfamily. As to expression, expressed by the venom duct.

It localises to the secreted. Its function is as follows. Iota-conotoxins bind to voltage-gated sodium channels (Nav) and act as agonists by shifting the voltage-dependence of activation to more hyperpolarized levels. Produces general excitatory symptoms. The sequence is that of Iota-conotoxin-like R11.7 from Conus radiatus (Rayed cone).